A 347-amino-acid polypeptide reads, in one-letter code: Phosphate acyltransferase (347 aa).

It belongs to the PlsX family. Homodimer. Probably interacts with PlsY.

It is found in the cytoplasm. It catalyses the reaction a fatty acyl-[ACP] + phosphate = an acyl phosphate + holo-[ACP]. Its pathway is lipid metabolism; phospholipid metabolism. In terms of biological role, catalyzes the reversible formation of acyl-phosphate (acyl-PO(4)) from acyl-[acyl-carrier-protein] (acyl-ACP). This enzyme utilizes acyl-ACP as fatty acyl donor, but not acyl-CoA. This is Phosphate acyltransferase from Anaplasma marginale (strain St. Maries).